Reading from the N-terminus, the 438-residue chain is UDP-N-acetylmuramate--L-alanine ligase (438 aa).

108–114 (GAHGKTS) contacts ATP.

Belongs to the MurCDEF family.

The protein resides in the cytoplasm. The enzyme catalyses UDP-N-acetyl-alpha-D-muramate + L-alanine + ATP = UDP-N-acetyl-alpha-D-muramoyl-L-alanine + ADP + phosphate + H(+). It participates in cell wall biogenesis; peptidoglycan biosynthesis. Functionally, cell wall formation. This Oceanobacillus iheyensis (strain DSM 14371 / CIP 107618 / JCM 11309 / KCTC 3954 / HTE831) protein is UDP-N-acetylmuramate--L-alanine ligase.